Consider the following 431-residue polypeptide: uncharacterized protein (431 aa).

3 disordered regions span residues 31–55 (VPASRIPEGGNVSASQPNGAHQAGV), 257–291 (QNGGRLSVSKDSDVYPTNGYGNGNQNRQNRSPKQD), and 365–431 (FQSP…HRKA). Residues 42–55 (VSASQPNGAHQAGV) are compositionally biased toward polar residues. Basic and acidic residues predominate over residues 412-425 (VEYRRGRSLRESRE).

This is an uncharacterized protein from Arabidopsis thaliana (Mouse-ear cress).